A 632-amino-acid chain; its full sequence is Probable extracellular metalloproteinase 2 (632 aa).

An N-terminal signal peptide occupies residues Met1–Gly19. A propeptide spanning residues Leu20–Ser244 is cleaved from the precursor. N-linked (GlcNAc...) asparagine glycans are attached at residues Asn81 and Asn270. His429 is a binding site for Zn(2+). The active site involves Glu430. His433 is a binding site for Zn(2+).

The protein belongs to the peptidase M36 family. Zn(2+) serves as cofactor.

The protein resides in the secreted. Functionally, secreted metalloproteinase probably acting as a virulence factor. The sequence is that of Probable extracellular metalloproteinase 2 (MEP2) from Arthroderma benhamiae (strain ATCC MYA-4681 / CBS 112371) (Trichophyton mentagrophytes).